The primary structure comprises 213 residues: Small ribosomal subunit protein uS3 (213 aa).

The KH type-2 domain maps to 38 to 106; the sequence is IRSYIKKLLY…EFSLEVTEVR (69 aa).

The protein belongs to the universal ribosomal protein uS3 family. In terms of assembly, part of the 30S ribosomal subunit. Forms a tight complex with proteins S10 and S14.

Binds the lower part of the 30S subunit head. Binds mRNA in the 70S ribosome, positioning it for translation. In Lawsonia intracellularis (strain PHE/MN1-00), this protein is Small ribosomal subunit protein uS3.